A 79-amino-acid chain; its full sequence is D-alanyl carrier protein (79 aa).

The Carrier domain maps to 1–77 (MDVKETILNI…KIISGVVELM (77 aa)). S35 bears the O-(pantetheine 4'-phosphoryl)serine mark.

It belongs to the DltC family. Post-translationally, 4'-phosphopantetheine is transferred from CoA to a specific serine of apo-DCP.

It is found in the cytoplasm. It participates in cell wall biogenesis; lipoteichoic acid biosynthesis. Carrier protein involved in the D-alanylation of lipoteichoic acid (LTA). The loading of thioester-linked D-alanine onto DltC is catalyzed by D-alanine--D-alanyl carrier protein ligase DltA. The DltC-carried D-alanyl group is further transferred to cell membrane phosphatidylglycerol (PG) by forming an ester bond, probably catalyzed by DltD. D-alanylation of LTA plays an important role in modulating the properties of the cell wall in Gram-positive bacteria, influencing the net charge of the cell wall. The polypeptide is D-alanyl carrier protein (Streptococcus suis (strain 05ZYH33)).